The following is a 182-amino-acid chain: ATP synthase subunit delta (182 aa).

This sequence belongs to the ATPase delta chain family. As to quaternary structure, F-type ATPases have 2 components, F(1) - the catalytic core - and F(0) - the membrane proton channel. F(1) has five subunits: alpha(3), beta(3), gamma(1), delta(1), epsilon(1). CF(0) has four main subunits: a(1), b(1), b'(1) and c(10-14). The alpha and beta chains form an alternating ring which encloses part of the gamma chain. F(1) is attached to F(0) by a central stalk formed by the gamma and epsilon chains, while a peripheral stalk is formed by the delta, b and b' chains.

The protein localises to the cellular thylakoid membrane. F(1)F(0) ATP synthase produces ATP from ADP in the presence of a proton or sodium gradient. F-type ATPases consist of two structural domains, F(1) containing the extramembraneous catalytic core and F(0) containing the membrane proton channel, linked together by a central stalk and a peripheral stalk. During catalysis, ATP synthesis in the catalytic domain of F(1) is coupled via a rotary mechanism of the central stalk subunits to proton translocation. Functionally, this protein is part of the stalk that links CF(0) to CF(1). It either transmits conformational changes from CF(0) to CF(1) or is implicated in proton conduction. This Trichodesmium erythraeum (strain IMS101) protein is ATP synthase subunit delta.